Here is a 226-residue protein sequence, read N- to C-terminus: Lipoprotein-releasing system ATP-binding protein LolD (226 aa).

The ABC transporter domain maps to 6 to 226 (IELKSVERHY…TLADGKVVPL (221 aa)). 42–49 (APSGTGKS) contacts ATP.

It belongs to the ABC transporter superfamily. Lipoprotein translocase (TC 3.A.1.125) family. The complex is composed of two ATP-binding proteins (LolD) and two transmembrane proteins (LolC and LolE).

The protein localises to the cell inner membrane. Its function is as follows. Part of the ABC transporter complex LolCDE involved in the translocation of mature outer membrane-directed lipoproteins, from the inner membrane to the periplasmic chaperone, LolA. Responsible for the formation of the LolA-lipoprotein complex in an ATP-dependent manner. The protein is Lipoprotein-releasing system ATP-binding protein LolD of Mesorhizobium japonicum (strain LMG 29417 / CECT 9101 / MAFF 303099) (Mesorhizobium loti (strain MAFF 303099)).